Reading from the N-terminus, the 313-residue chain is MSLKVNILGHEFSNPFMNAAGVLCTTEEDLRRMTESESGSLIGKSCTLAPRTGNPEPRYFGLPLGSINSMGLPNLGVDFYLSYAAQTHDYSRKPLFLSMSGLSVEESVEMVKKLAPITKEKGTILELNLSCPNVPGKPQVGYDFDTTRTYLQKVSEAYGLPFGVKMPPYFDIAHFDMAAAVLNDFPLVKFITCVNSIGNGLVIDPANETVVIKPKQGFGGLGGKYVLPTALANVNAFFRRCPDKLVFGCGGVYSGEEAFLHILAGASMVQVGTALHDEGPIIFARLNKELQEIMTNKGYKTLDEFRGRVKTMD.

Residues Ala20 and 44–45 each bind FMN; that span reads KS. Substrate-binding positions include Lys44, 68-72, and Asn128; that span reads NSMGL. Asn128 serves as a coordination point for FMN. The active-site Nucleophile is Cys131. Asn133 provides a ligand contact to substrate. 2 residues coordinate FMN: Lys165 and Val194. 195 to 196 contributes to the substrate binding site; it reads NS. Residues Gly223, Cys249, 249–251, and 272–273 each bind FMN; these read CGG and GT.

The protein belongs to the dihydroorotate dehydrogenase family. Type 1 subfamily. Homodimer. Requires FMN as cofactor.

It localises to the cytoplasm. The enzyme catalyses (S)-dihydroorotate + fumarate = orotate + succinate. The protein operates within pyrimidine metabolism; UMP biosynthesis via de novo pathway. Functionally, catalyzes the conversion of dihydroorotate to orotate with fumarate as the electron acceptor. Molecular oxygen can replace fumarate in vitro. In Trypanosoma brucei brucei (strain 927/4 GUTat10.1), this protein is Dihydroorotate dehydrogenase (fumarate).